The primary structure comprises 72 residues: N-alpha-acetyltransferase 38, NatC auxiliary subunit (72 aa).

The 70-residue stretch at 3-72 folds into the Sm domain; the sequence is NGEILLTSWL…KHIKSFSVRA (70 aa).

In terms of assembly, component of the N-terminal acetyltransferase C (NatC) complex, composed of the catalytic subunit Naa30, a large auxiliary subunit Naa35 and a small auxiliary subunit Naa38.

It localises to the endoplasmic reticulum. Its function is as follows. Component of the NatC N-terminal acetyltransferase, which associates with the ribosome to acetylate nascent protein chains in a cotranslational manner. NatC acetylates protein N-termini starting with methionine, followed by a hydrophobic or amphipathic amino acid, with amino acids at positions 3 and 4 also contributing to NatC recognition. The first 4 amino acids of cognate substrates are recognized at the Naa30-Naa35 interface. NatC-dependent acetylation targets various substrate proteins to specific subcellular sites. In Schizosaccharomyces pombe (strain 972 / ATCC 24843) (Fission yeast), this protein is N-alpha-acetyltransferase 38, NatC auxiliary subunit (naa38).